Reading from the N-terminus, the 176-residue chain is Protein OPG163 (176 aa).

Positions 1–14 are cleaved as a signal peptide; the sequence is MDAAFVITPMGVLT.

Belongs to the orthopoxvirus OPG163 family.

It localises to the host endosome. Functionally, mildly affects the expression of MHC class II molecules on the surface of host antigen presenting cells (APCs). The chain is Protein OPG163 (OPG163) from Vaccinia virus (strain Western Reserve) (VACV).